We begin with the raw amino-acid sequence, 246 residues long: Ribonuclease 3 (246 aa).

Residues 18–147 form the RNase III domain; it reads FQELQKKIGI…FIGALYLDQG (130 aa). Glu-60 provides a ligand contact to Mg(2+). The active site involves Asp-64. Residues Asp-133 and Glu-136 each contribute to the Mg(2+) site. Glu-136 is a catalytic residue. The DRBM domain occupies 173–242; sequence DFKSQLQELV…AQMALETLRA (70 aa).

This sequence belongs to the ribonuclease III family. As to quaternary structure, homodimer. The cofactor is Mg(2+).

The protein localises to the cytoplasm. The catalysed reaction is Endonucleolytic cleavage to 5'-phosphomonoester.. Functionally, digests double-stranded RNA. Involved in the processing of primary rRNA transcript to yield the immediate precursors to the large and small rRNAs (23S and 16S). Processes some mRNAs, and tRNAs when they are encoded in the rRNA operon. Processes pre-crRNA and tracrRNA of type II CRISPR loci if present in the organism. This Geobacillus thermodenitrificans (strain NG80-2) protein is Ribonuclease 3.